A 164-amino-acid polypeptide reads, in one-letter code: Zinc finger A20 and AN1 domain-containing stress-associated protein 1 (164 aa).

The segment at alanine 16–serine 50 adopts an A20-type zinc-finger fold. Zn(2+) contacts are provided by cysteine 22, cysteine 26, cysteine 38, and cysteine 41. The span at serine 48–proline 58 shows a compositional bias: low complexity. The segment at serine 48 to proline 81 is disordered. An AN1-type zinc finger spans residues threonine 99 to alanine 145. Residues cysteine 105, cysteine 108, cysteine 119, cysteine 121, cysteine 126, histidine 129, histidine 135, and cysteine 137 each coordinate Zn(2+).

Its function is as follows. May be involved in environmental stress response. This is Zinc finger A20 and AN1 domain-containing stress-associated protein 1 (SAP1) from Oryza sativa subsp. indica (Rice).